The primary structure comprises 231 residues: Sugar fermentation stimulation protein homolog (231 aa).

Belongs to the SfsA family.

In Geobacter sp. (strain M21), this protein is Sugar fermentation stimulation protein homolog.